The following is a 465-amino-acid chain: 6-phospho-beta-glucosidase GmuD (465 aa).

Glu170 acts as the Proton donor in catalysis. The active-site Nucleophile is Glu368.

This sequence belongs to the glycosyl hydrolase 1 family.

It carries out the reaction 6-phospho-beta-D-glucosyl-(1-&gt;4)-D-glucose + H2O = D-glucose 6-phosphate + D-glucose. Functionally, phospho-beta-D-glucosidase that seems to be involved in the degradation of glucomannan. Is also capable of hydrolyzing aryl-phospho-beta-D-glucosides, although very weakly, and plays only a minor role, if any, in the degradation of these substrates in vivo. This Bacillus subtilis (strain 168) protein is 6-phospho-beta-glucosidase GmuD (gmuD).